Reading from the N-terminus, the 372-residue chain is N-methyl-L-tryptophan oxidase (372 aa).

4–34 (DLIIIGSGSVGAAAGYYATRAGLNVLMTDAH) contributes to the FAD binding site. S-8alpha-FAD cysteine is present on C308.

It belongs to the MSOX/MTOX family. MTOX subfamily. As to quaternary structure, monomer. FAD serves as cofactor.

The catalysed reaction is N(alpha)-methyl-L-tryptophan + O2 + H2O = L-tryptophan + formaldehyde + H2O2. Catalyzes the oxidative demethylation of N-methyl-L-tryptophan. In Escherichia coli O9:H4 (strain HS), this protein is N-methyl-L-tryptophan oxidase.